The sequence spans 1504 residues: DNA polymerase zeta catalytic subunit (1504 aa).

Cys-1398, Cys-1401, Cys-1414, and Cys-1417 together coordinate Zn(2+). The CysA-type zinc finger occupies 1398–1417 (CCNCGEELTKICSLQLCDDC). [4Fe-4S] cluster contacts are provided by Cys-1446, Cys-1449, Cys-1468, and Cys-1473. Positions 1446–1473 (CRTCSYRYTSDAGIENDHIASKCNSYDC) match the CysB motif motif.

The protein belongs to the DNA polymerase type-B family. Forms DNA polymerase zeta with REV7. [4Fe-4S] cluster is required as a cofactor.

The protein localises to the mitochondrion. The protein resides in the nucleus. It carries out the reaction DNA(n) + a 2'-deoxyribonucleoside 5'-triphosphate = DNA(n+1) + diphosphate. Nonessential DNA polymerase. Required for DNA damage induced mutagenesis. Involved in DNA repair, mitochondrial DNA repair and translesion synthesis. Translesion synthesis in S.cerevisiae may use a specialized DNA polymerase that is not required for other DNA replicative processes. Has a role in the bypass of abasic (AP) sites. Highly inefficient in incorporating nucleotides opposite the AP site, but efficiently extends from nucleotides, particularly an A, inserted opposite the lesion. This chain is DNA polymerase zeta catalytic subunit (REV3), found in Saccharomyces cerevisiae (strain ATCC 204508 / S288c) (Baker's yeast).